Reading from the N-terminus, the 290-residue chain is ATP synthase gamma chain (290 aa).

It belongs to the ATPase gamma chain family. F-type ATPases have 2 components, CF(1) - the catalytic core - and CF(0) - the membrane proton channel. CF(1) has five subunits: alpha(3), beta(3), gamma(1), delta(1), epsilon(1). CF(0) has three main subunits: a, b and c.

It localises to the cell membrane. Functionally, produces ATP from ADP in the presence of a proton gradient across the membrane. The gamma chain is believed to be important in regulating ATPase activity and the flow of protons through the CF(0) complex. This chain is ATP synthase gamma chain, found in Buchnera aphidicola subsp. Acyrthosiphon pisum (strain 5A).